A 738-amino-acid chain; its full sequence is DNA topoisomerase 4 subunit A (738 aa).

One can recognise a Topo IIA-type catalytic domain in the interval 32–496; sequence LPDVRDGLKP…SFEEVTLTNQ (465 aa). Y120 functions as the O-(5'-phospho-DNA)-tyrosine intermediate in the catalytic mechanism.

It belongs to the type II topoisomerase GyrA/ParC subunit family. ParC type 1 subfamily. Heterotetramer composed of ParC and ParE.

It is found in the cell membrane. It catalyses the reaction ATP-dependent breakage, passage and rejoining of double-stranded DNA.. In terms of biological role, topoisomerase IV is essential for chromosome segregation. It relaxes supercoiled DNA. Performs the decatenation events required during the replication of a circular DNA molecule. In Rickettsia conorii (strain ATCC VR-613 / Malish 7), this protein is DNA topoisomerase 4 subunit A.